Here is a 201-residue protein sequence, read N- to C-terminus: Phospholipase A2 inhibitor PIP (201 aa).

The N-terminal stretch at 1–19 (MKSLQTICLLFIFIARGTS) is a signal peptide. Cystine bridges form between Cys22/Cys46, Cys25/Cys32, Cys39/Cys67, Cys73/Cys94, Cys95/Cys100, Cys118/Cys143, Cys136/Cys165, and Cys169/Cys191. Asn157 is a glycosylation site (N-linked (GlcNAc...) asparagine).

As to quaternary structure, homohexamer. Post-translationally, glycosylated. Expressed by the liver.

The protein resides in the secreted. In terms of biological role, inhibits the enzymatic activity of phospholipase A2 (PA2). Binds to the major PLA2 toxin of D.russelli siamensis (Daboiatoxin, AC Q7T2R1, and AC Q7T3T5) at 1-2-fold molar excess of inhibitor to toxin. It exhibits broad spectra in neutralizing the toxicity of various snake venoms and toxins and inhibits the formation of edema in mice. May bind to PLA2 through its proline-rich hydrophobic core region. The polypeptide is Phospholipase A2 inhibitor PIP (Malayopython reticulatus (Reticulate python)).